Consider the following 241-residue polypeptide: Urease accessory protein UreF (241 aa).

The protein belongs to the UreF family. In terms of assembly, ureD, UreF and UreG form a complex that acts as a GTP-hydrolysis-dependent molecular chaperone, activating the urease apoprotein by helping to assemble the nickel containing metallocenter of UreC. The UreE protein probably delivers the nickel.

The protein resides in the cytoplasm. Its function is as follows. Required for maturation of urease via the functional incorporation of the urease nickel metallocenter. This chain is Urease accessory protein UreF, found in Rhodopseudomonas palustris (strain BisB18).